Consider the following 394-residue polypeptide: Nuclear hormone receptor family member nhr-18 (394 aa).

The nuclear receptor DNA-binding region spans 8-83; it reads SGSCEVCGDK…VGMDTRRFQT (76 aa). 2 NR C4-type zinc fingers span residues 11 to 31 and 48 to 71; these read CEVC…CRAC and CPNG…LKKC. Residues 134 to 394 enclose the NR LBD domain; sequence MLQKPTNHVL…FSHPEMFEAT (261 aa).

This sequence belongs to the nuclear hormone receptor family.

It localises to the nucleus. In terms of biological role, orphan nuclear receptor. The polypeptide is Nuclear hormone receptor family member nhr-18 (nhr-18) (Caenorhabditis elegans).